Consider the following 271-residue polypeptide: Malonyl-[acyl-carrier protein] O-methyltransferase (271 aa).

This sequence belongs to the methyltransferase superfamily.

The catalysed reaction is malonyl-[ACP] + S-adenosyl-L-methionine = malonyl-[ACP] methyl ester + S-adenosyl-L-homocysteine. The protein operates within cofactor biosynthesis; biotin biosynthesis. Functionally, converts the free carboxyl group of a malonyl-thioester to its methyl ester by transfer of a methyl group from S-adenosyl-L-methionine (SAM). It allows to synthesize pimeloyl-ACP via the fatty acid synthetic pathway. This Halalkalibacterium halodurans (strain ATCC BAA-125 / DSM 18197 / FERM 7344 / JCM 9153 / C-125) (Bacillus halodurans) protein is Malonyl-[acyl-carrier protein] O-methyltransferase.